The following is a 448-amino-acid chain: Probable ribonuclease FAU-1 (448 aa).

Residues 426 to 448 form a disordered region; sequence EAPGGKICTSEGLTSALPQSSSA. The span at 436 to 448 shows a compositional bias: polar residues; that stretch reads EGLTSALPQSSSA.

It belongs to the FAU-1 family.

Probable RNase involved in rRNA stability through maturation and/or degradation of precursor rRNAs. Binds to RNA in loop regions with AU-rich sequences. The protein is Probable ribonuclease FAU-1 of Pyrobaculum islandicum (strain DSM 4184 / JCM 9189 / GEO3).